Reading from the N-terminus, the 759-residue chain is RNA-binding protein 28 (759 aa).

Alanine 2 is modified (N-acetylalanine). An RRM 1 domain is found at 4-80 (LTLFVGRLPP…CKINVTVAKK (77 aa)). The tract at residues 84–105 (NKTKEKGKNENSECPKKEPKAK) is disordered. Basic and acidic residues predominate over residues 85–101 (KTKEKGKNENSECPKKE). An RRM 2 domain is found at 114–191 (ARLIIRNLSF…RTVAVDWAVA (78 aa)). Residue serine 122 is modified to Phosphoserine. The disordered stretch occupies residues 201-330 (VSAIGEEKSH…NKKKRKLPSD (130 aa)). Residues 205–224 (GEEKSHESKHQESVKKKGRE) are compositionally biased toward basic and acidic residues. Composition is skewed to acidic residues over residues 225–256 (EEDMEEEENDDDDDDDDEEDGVFDDEDEEEEN) and 284–313 (SEEDSDLEESDSIDDGEELAQSDTSTEEQE). 2 consecutive RRM domains span residues 335–419 (KTVF…LAVT) and 487–597 (TRLC…RSLQ). Phosphoserine is present on serine 397. A disordered region spans residues 594 to 759 (RSLQKMRSKP…LAKRSKWFDS (166 aa)). Residues 615–640 (PAKDQQQKAAQHHTEEQSKVPPEQKR) are compositionally biased toward basic and acidic residues. Residue lysine 653 forms a Glycyl lysine isopeptide (Lys-Gly) (interchain with G-Cter in SUMO2) linkage. Positions 689–698 (VKPVHPKKPK) are enriched in basic residues. Polar residues predominate over residues 700-715 (QINQWKQEKQQLSSEQ).

In terms of assembly, interacts with U1, U2, U4, U5, and U6 spliceosomal small nuclear RNAs (snRNAs). In terms of tissue distribution, ubiquitously expressed.

It is found in the nucleus. Its subcellular location is the nucleolus. Its function is as follows. Nucleolar component of the spliceosomal ribonucleoprotein complexes. In Homo sapiens (Human), this protein is RNA-binding protein 28 (RBM28).